A 32-amino-acid polypeptide reads, in one-letter code: uncharacterized protein (32 aa).

This is an uncharacterized protein from Saccharomyces cerevisiae (strain ATCC 204508 / S288c) (Baker's yeast).